A 621-amino-acid chain; its full sequence is (-)-beta-phellandrene synthase 1, chloroplastic (621 aa).

The N-terminal 49 residues, 1–49 (MALALVSVAPLVSMRRSLFSSPYELKSIDKTIPNLVMCRKRMSGTPSIR), are a transit peptide targeting the chloroplast. D372, D376, and D524 together coordinate Mg(2+). Positions 372–376 (DDIYD) match the DDXXD motif motif.

The protein belongs to the terpene synthase family. Tpsd subfamily. Mg(2+) serves as cofactor. It depends on Mn(2+) as a cofactor.

The protein localises to the plastid. It is found in the chloroplast. The enzyme catalyses (2E)-geranyl diphosphate = (-)-beta-phellandrene + diphosphate. It participates in terpene metabolism; oleoresin biosynthesis. The protein operates within secondary metabolite biosynthesis; terpenoid biosynthesis. Its function is as follows. Monoterpene synthase (TPS) involved in the biosynthesis of monoterpene natural products included in conifer oleoresin secretions and volatile emissions; these compounds contribute to biotic and abiotic stress defense against herbivores and pathogens. Catalyzes the conversion of (2E)-geranyl diphosphate (GPP) to (-)-beta-phellandrene and, to a lower extent, to (-)-alpha-phellandrene. The protein is (-)-beta-phellandrene synthase 1, chloroplastic of Pinus contorta (Shore pine).